The sequence spans 352 residues: Photosystem II D2 protein (352 aa).

A helical membrane pass occupies residues 40–60 (CAYLALGGWLTGTTFVTSWYT). His-117 provides a ligand contact to chlorophyll a. Residues 124–140 (GFMLRQFEIARLVGVRP) traverse the membrane as a helical segment. Pheophytin a-binding residues include Gln-129 and Asn-142. A helical membrane pass occupies residues 152 to 165 (VFVSVFLIYPLGQS). His-197 contacts chlorophyll a. A helical transmembrane segment spans residues 207–227 (GALLCAIHGATVENTLYKDGE). His-214 and Phe-261 together coordinate a plastoquinone. His-214 lines the Fe cation pocket. Fe cation is bound at residue His-268. A helical membrane pass occupies residues 278-294 (GLWMSSIGVVGLALNLR).

Belongs to the reaction center PufL/M/PsbA/D family. As to quaternary structure, PSII is composed of 1 copy each of membrane proteins PsbA, PsbB, PsbC, PsbD, PsbE, PsbF, PsbH, PsbI, PsbJ, PsbK, PsbL, PsbM, PsbT, PsbX, PsbY, PsbZ, Psb30/Ycf12, peripheral proteins PsbO, CyanoQ (PsbQ), PsbU, PsbV and a large number of cofactors. It forms dimeric complexes. Requires The D1/D2 heterodimer binds P680, chlorophylls that are the primary electron donor of PSII, and subsequent electron acceptors. It shares a non-heme iron and each subunit binds pheophytin, quinone, additional chlorophylls, carotenoids and lipids. There is also a Cl(-1) ion associated with D1 and D2, which is required for oxygen evolution. The PSII complex binds additional chlorophylls, carotenoids and specific lipids. as cofactor.

The protein localises to the cellular thylakoid membrane. It carries out the reaction 2 a plastoquinone + 4 hnu + 2 H2O = 2 a plastoquinol + O2. Functionally, photosystem II (PSII) is a light-driven water:plastoquinone oxidoreductase that uses light energy to abstract electrons from H(2)O, generating O(2) and a proton gradient subsequently used for ATP formation. It consists of a core antenna complex that captures photons, and an electron transfer chain that converts photonic excitation into a charge separation. The D1/D2 (PsbA/PsbD) reaction center heterodimer binds P680, the primary electron donor of PSII as well as several subsequent electron acceptors. D2 is needed for assembly of a stable PSII complex. The polypeptide is Photosystem II D2 protein (Synechococcus sp. (strain JA-3-3Ab) (Cyanobacteria bacterium Yellowstone A-Prime)).